Reading from the N-terminus, the 115-residue chain is Pycsar effector protein TpPycTM (115 aa).

2 helical membrane-spanning segments follow: residues 44-64 and 74-94; these read IGNLLLIDTITVGIFITYATN and VWNILLFITGLIFTVSSVILV.

It localises to the cell inner membrane. Its function is as follows. Pycsar (pyrimidine cyclase system for antiphage resistance) provides immunity against bacteriophage. The pyrimidine cyclase (PycC) synthesizes cyclic nucleotides in response to infection; these serve as specific second messenger signals. The signals activate the adjacent effector, leading to bacterial cell death and abortive phage infection. A clade C Pycsar system. Functionally, the effector gene of a two-gene Pycsar system. Expression of this and adjacent uridylate cyclase TpPycC (AC A0A1T4LJ54) probably confers resistance to bacteriophage. The genes are probably only expressed in response to bacteriophage infection. Probably only responds to cUMP (produced by its cognate NTP cyclase), acts by impairing membrane integrity. In Treponema porcinum, this protein is Pycsar effector protein TpPycTM.